The chain runs to 293 residues: Ribosomal protein L11 methyltransferase (293 aa).

Residues T145, G166, D188, and N230 each contribute to the S-adenosyl-L-methionine site.

Belongs to the methyltransferase superfamily. PrmA family.

The protein localises to the cytoplasm. It catalyses the reaction L-lysyl-[protein] + 3 S-adenosyl-L-methionine = N(6),N(6),N(6)-trimethyl-L-lysyl-[protein] + 3 S-adenosyl-L-homocysteine + 3 H(+). Its function is as follows. Methylates ribosomal protein L11. In Shewanella denitrificans (strain OS217 / ATCC BAA-1090 / DSM 15013), this protein is Ribosomal protein L11 methyltransferase.